A 176-amino-acid polypeptide reads, in one-letter code: MNRAAIAAGKPSGSISTGKPRRKTRAEVSEEMKHEIREAFDLFDADRSGRIDFHELKVAMRALGFDVKKEEIQRIMNEYDRDQLGEITFQDFEEVMIEKISNRDPTEEILKAFRLFDDDATGRISLKNLRRVAKELSENISDEELLAMIQEFDRDGDGEIDEEDFIAILRSTSAFS.

Residues 1-27 form a disordered region; that stretch reads MNRAAIAAGKPSGSISTGKPRRKTRAE. EF-hand domains follow at residues 31–66, 67–102, 104–139, and 140–175; these read EMKHEIREAFDLFDADRSGRIDFHELKVAMRALGFD, VKKEEIQRIMNEYDRDQLGEITFQDFEEVMIEKISN, DPTEEILKAFRLFDDDATGRISLKNLRRVAKELSEN, and ISDEELLAMIQEFDRDGDGEIDEEDFIAILRSTSAF. The Ca(2+) site is built by aspartate 44, aspartate 46, serine 48, arginine 50, and glutamate 55. Residues aspartate 153, aspartate 155, aspartate 157, glutamate 159, and aspartate 164 each contribute to the Ca(2+) site.

It belongs to the centrin family. As to quaternary structure, monomer.

The protein localises to the cytoplasm. It localises to the cytoskeleton. The protein resides in the microtubule organizing center. It is found in the centrosome. Plays a fundamental role in microtubule-organizing center structure and function. The chain is Caltractin (CAL) from Giardia intestinalis (Giardia lamblia).